Reading from the N-terminus, the 120-residue chain is Flagellar transcriptional regulator FlhD (120 aa).

This sequence belongs to the FlhD family. Homodimer; disulfide-linked. Forms a heterohexamer composed of two FlhC and four FlhD subunits. Each FlhC binds a FlhD dimer, forming a heterotrimer, and a hexamer assembles by dimerization of two heterotrimers.

It is found in the cytoplasm. Its function is as follows. Functions in complex with FlhC as a master transcriptional regulator that regulates transcription of several flagellar and non-flagellar operons by binding to their promoter region. Activates expression of class 2 flagellar genes, including fliA, which is a flagellum-specific sigma factor that turns on the class 3 genes. Also regulates genes whose products function in a variety of physiological pathways. The chain is Flagellar transcriptional regulator FlhD from Erwinia tasmaniensis (strain DSM 17950 / CFBP 7177 / CIP 109463 / NCPPB 4357 / Et1/99).